The chain runs to 142 residues: Large ribosomal subunit protein uL13 (142 aa).

The protein belongs to the universal ribosomal protein uL13 family. In terms of assembly, part of the 50S ribosomal subunit.

In terms of biological role, this protein is one of the early assembly proteins of the 50S ribosomal subunit, although it is not seen to bind rRNA by itself. It is important during the early stages of 50S assembly. This chain is Large ribosomal subunit protein uL13, found in Xanthomonas oryzae pv. oryzae (strain MAFF 311018).